Here is a 153-residue protein sequence, read N- to C-terminus: Transcriptional repressor NrdR (153 aa).

Residues 3–34 (CPFCNNINTQVKDSRAIEDDILIRRRRICLVC) fold into a zinc finger. Residues 49-139 (FMVIKKNGET…VYMNFKNIND (91 aa)) enclose the ATP-cone domain.

This sequence belongs to the NrdR family. The cofactor is Zn(2+).

Its function is as follows. Negatively regulates transcription of bacterial ribonucleotide reductase nrd genes and operons by binding to NrdR-boxes. The sequence is that of Transcriptional repressor NrdR from Ehrlichia canis (strain Jake).